Reading from the N-terminus, the 117-residue chain is MAARNIGIQVKAPEVECDDKNCPFHGNLPVRGQSFVGVVVSDKPHKTVIIKREVVKYIKKYERYERRTTKLAAHNPPCIHARVGDIVRVMECRPISKTKAFVVVEKLGRIDEVKGEE.

The protein belongs to the universal ribosomal protein uS17 family. As to quaternary structure, part of the 30S ribosomal subunit.

Its function is as follows. One of the primary rRNA binding proteins, it binds specifically to the 5'-end of 16S ribosomal RNA. In Methanocaldococcus jannaschii (strain ATCC 43067 / DSM 2661 / JAL-1 / JCM 10045 / NBRC 100440) (Methanococcus jannaschii), this protein is Small ribosomal subunit protein uS17.